The sequence spans 237 residues: Ribosomal RNA small subunit methyltransferase G (237 aa).

Residues glycine 78, phenylalanine 83, 129–130 (AE), and arginine 148 contribute to the S-adenosyl-L-methionine site. The tract at residues 218–237 (KKETPRKYPRKAGTPNKKPL) is disordered.

Belongs to the methyltransferase superfamily. RNA methyltransferase RsmG family.

It localises to the cytoplasm. Functionally, specifically methylates the N7 position of a guanine in 16S rRNA. The protein is Ribosomal RNA small subunit methyltransferase G of Streptococcus uberis (strain ATCC BAA-854 / 0140J).